The primary structure comprises 309 residues: Aspartate carbamoyltransferase catalytic subunit (309 aa).

2 residues coordinate carbamoyl phosphate: arginine 55 and threonine 56. An L-aspartate-binding site is contributed by lysine 85. Carbamoyl phosphate-binding residues include arginine 106, histidine 135, and glutamine 138. Arginine 168 and arginine 230 together coordinate L-aspartate. Residues leucine 268 and proline 269 each contribute to the carbamoyl phosphate site.

Belongs to the aspartate/ornithine carbamoyltransferase superfamily. ATCase family. As to quaternary structure, heterododecamer (2C3:3R2) of six catalytic PyrB chains organized as two trimers (C3), and six regulatory PyrI chains organized as three dimers (R2).

It catalyses the reaction carbamoyl phosphate + L-aspartate = N-carbamoyl-L-aspartate + phosphate + H(+). It functions in the pathway pyrimidine metabolism; UMP biosynthesis via de novo pathway; (S)-dihydroorotate from bicarbonate: step 2/3. Its function is as follows. Catalyzes the condensation of carbamoyl phosphate and aspartate to form carbamoyl aspartate and inorganic phosphate, the committed step in the de novo pyrimidine nucleotide biosynthesis pathway. This chain is Aspartate carbamoyltransferase catalytic subunit, found in Photobacterium profundum (strain SS9).